A 188-amino-acid polypeptide reads, in one-letter code: dCTP deaminase (188 aa).

Residues 111–116 (KSTYAR), 135–137 (TLE), Gln156, Tyr170, and Gln180 each bind dCTP. Glu137 functions as the Proton donor/acceptor in the catalytic mechanism.

The protein belongs to the dCTP deaminase family. Homotrimer.

The enzyme catalyses dCTP + H2O + H(+) = dUTP + NH4(+). The protein operates within pyrimidine metabolism; dUMP biosynthesis; dUMP from dCTP (dUTP route): step 1/2. Its function is as follows. Catalyzes the deamination of dCTP to dUTP. The protein is dCTP deaminase of Marinobacter nauticus (strain ATCC 700491 / DSM 11845 / VT8) (Marinobacter aquaeolei).